Reading from the N-terminus, the 350-residue chain is Peptide-N(4)-(N-acetyl-beta-glucosaminyl)asparagine amidase (350 aa).

Positions 123, 126, 157, and 160 each coordinate Zn(2+). The Nucleophile role is filled by Cys-183. Residues His-210 and Asp-227 contribute to the active site. Glu-230 provides a ligand contact to substrate. The disordered stretch occupies residues Glu-324–Arg-350. The span at Asp-340–Arg-350 shows a compositional bias: basic and acidic residues.

Belongs to the transglutaminase-like superfamily. PNGase family. The cofactor is Zn(2+).

The protein resides in the cytoplasm. The catalysed reaction is Hydrolysis of an N(4)-(acetyl-beta-D-glucosaminyl)asparagine residue in which the glucosamine residue may be further glycosylated, to yield a (substituted) N-acetyl-beta-D-glucosaminylamine and a peptide containing an aspartate residue.. Specifically deglycosylates the denatured form of N-linked glycoproteins in the cytoplasm and assists their proteasome-mediated degradation. Cleaves the beta-aspartyl-glucosamine (GlcNAc) of the glycan and the amide side chain of Asn, converting Asn to Asp. Prefers proteins containing high-mannose over those bearing complex type oligosaccharides. Can recognize misfolded proteins in the endoplasmic reticulum that are exported to the cytosol to be destroyed and deglycosylate them, while it has no activity toward native proteins. Deglycosylation is a prerequisite for subsequent proteasome-mediated degradation of some, but not all, misfolded glycoproteins. This chain is Peptide-N(4)-(N-acetyl-beta-glucosaminyl)asparagine amidase (PNG1), found in Eremothecium gossypii (strain ATCC 10895 / CBS 109.51 / FGSC 9923 / NRRL Y-1056) (Yeast).